The following is a 393-amino-acid chain: NAD(P)H-quinone oxidoreductase subunit H, chloroplastic (393 aa).

The protein belongs to the complex I 49 kDa subunit family. As to quaternary structure, NDH is composed of at least 16 different subunits, 5 of which are encoded in the nucleus.

It localises to the plastid. The protein localises to the chloroplast thylakoid membrane. It catalyses the reaction a plastoquinone + NADH + (n+1) H(+)(in) = a plastoquinol + NAD(+) + n H(+)(out). The enzyme catalyses a plastoquinone + NADPH + (n+1) H(+)(in) = a plastoquinol + NADP(+) + n H(+)(out). Functionally, NDH shuttles electrons from NAD(P)H:plastoquinone, via FMN and iron-sulfur (Fe-S) centers, to quinones in the photosynthetic chain and possibly in a chloroplast respiratory chain. The immediate electron acceptor for the enzyme in this species is believed to be plastoquinone. Couples the redox reaction to proton translocation, and thus conserves the redox energy in a proton gradient. The chain is NAD(P)H-quinone oxidoreductase subunit H, chloroplastic from Anthoceros angustus (Hornwort).